The primary structure comprises 90 residues: Barstar (90 aa).

It belongs to the barstar family.

It is found in the cytoplasm. Its function is as follows. Inhibitor of the ribonuclease barnase. Forms a one-to-one non-covalent complex. This Bacillus amyloliquefaciens (Bacillus velezensis) protein is Barstar.